The sequence spans 243 residues: MQAVVLAAGKGTRLRPLTEDKPKGMVEVDGKPILTHCFDQLVDLGAEKLVVVVGYKKEIIIQHYDDEYRGVPITYAHQREQKGLAHALLTVEDHIDEDFMLMLGDNIFNANLGDVVKRQREDRADAAFLVEEVDWDEASRYGVCVTNDYGEITEVIEKPEEPPSNLVMTGFYTFTPAIFHACHLVQPSNRGEYEISEAIDLLIRSGRTIDAIRIDGWRLDIGYPEDRDEAEQRLQEETTQATE.

It belongs to the UDPGP type 2 family.

The catalysed reaction is alpha-D-glucose 1-phosphate + UTP + H(+) = UDP-alpha-D-glucose + diphosphate. It participates in cell surface structure biogenesis; S-layer biogenesis. Functionally, involved in the assembly of a N-linked pentasaccharide that decorates the S-layer glycoprotein and flagellins. Involved in the biosynthesis of the hexuronic acid found at position 3 of the pentasaccharide. The sequence is that of UTP--glucose-1-phosphate uridylyltransferase AglF (aglF) from Haloferax volcanii (strain ATCC 29605 / DSM 3757 / JCM 8879 / NBRC 14742 / NCIMB 2012 / VKM B-1768 / DS2) (Halobacterium volcanii).